A 392-amino-acid polypeptide reads, in one-letter code: Cytochrome P450 monooxygenase ppzE (392 aa).

Residues 10-30 (LELVWFVALYPFACWTLFAVL) traverse the membrane as a helical segment. Residue asparagine 319 is glycosylated (N-linked (GlcNAc...) asparagine). Cysteine 353 contacts heme. N-linked (GlcNAc...) asparagine glycosylation is present at asparagine 372.

The protein belongs to the cytochrome P450 family. Heme is required as a cofactor.

It localises to the membrane. Its pathway is secondary metabolite biosynthesis. Cytochrome P450 monooxygenase; part of the gene cluster that mediates the biosynthesis of pyrrolopyrazines, secondary metabolites showing insecticidal activity. The role of ppzE within the pathway has still to be determined. The single multifunctional NRPS ppzA is sufficient to produce peramine via condensation of 1-pyrroline-5-carboxylate and arginine, N-methylation of the alpha-amino group of arginine and reduction of the thioester and the cyclization to form an iminium ion resulting in release from the peptide synthetase. Deprotonation of this intermediate and oxidation of the pyrroline ring would give rise to peramine. In Epichloe species that produce only peramine, the peramine synthetase gene is not localized in a gene cluster, in contrast to Metarhizium species that contain additional pyrrolopyrazine biosynthesis genes. The 2-oxoglutarate-Fe(II) type oxidoreductase ppzC hydroxylates peramine to yield the newly identified compound 8-hydroxyperamine whereas ppzD converts L-proline into trans-4-hydroxy-L-proline, a precursor of peramine biosynthesis. The protein is Cytochrome P450 monooxygenase ppzE of Metarhizium rileyi (strain RCEF 4871) (Nomuraea rileyi).